The following is a 115-amino-acid chain: Nascent polypeptide-associated complex protein (115 aa).

Positions 6–72 constitute an NAC-A/B domain; the sequence is PMNPKQLKKL…SEEEKAIINI (67 aa).

The protein belongs to the NAC-alpha family. Homodimer. Interacts with the ribosome. Binds ribosomal RNA.

Functionally, contacts the emerging nascent chain on the ribosome. The chain is Nascent polypeptide-associated complex protein from Pyrococcus horikoshii (strain ATCC 700860 / DSM 12428 / JCM 9974 / NBRC 100139 / OT-3).